The chain runs to 103 residues: Small ribosomal subunit protein uS10 (103 aa).

The protein belongs to the universal ribosomal protein uS10 family. As to quaternary structure, part of the 30S ribosomal subunit.

In terms of biological role, involved in the binding of tRNA to the ribosomes. The protein is Small ribosomal subunit protein uS10 of Mycoplasmopsis pulmonis (strain UAB CTIP) (Mycoplasma pulmonis).